Here is a 418-residue protein sequence, read N- to C-terminus: Thyroid hormone receptor alpha (418 aa).

Residues 1–41 (MDQNLSGLDCLSEPDEKRWPDGKRKRKNSQCMGKSGMSGDS) are disordered. A modulating region spans residues 1-60 (MDQNLSGLDCLSEPDEKRWPDGKRKRKNSQCMGKSGMSGDSSVSLLSAGYIPSYLTKDEP). The Zn(2+) site is built by Cys-61, Cys-64, Cys-78, Cys-81, Cys-99, Cys-105, Cys-115, and Cys-118. 2 consecutive NR C4-type zinc fingers follow at residues 61-81 (CVVCSDKATGYHYRCITCEGC) and 99-123 (CKYDGCCIIDKITRNQCQLCRFKKC). Residues 61–135 (CVVCSDKATG…VGMAMDLVLD (75 aa)) constitute a DNA-binding region (nuclear receptor). Residues 171-415 (EEWELIRIVT…PPLFLEVFED (245 aa)) form the NR LBD domain. Arg-236 and Ser-285 together coordinate 3,3',5-triiodo-L-thyronine.

The protein belongs to the nuclear hormone receptor family. NR1 subfamily. Highest level of expression in erythrocytes. Also expressed in liver, tail, eye, muscle and skin.

It localises to the nucleus. Functionally, nuclear hormone receptor that can act as a repressor or activator of transcription. High affinity receptor for thyroid hormones, including triiodothyronine and thyroxine. The polypeptide is Thyroid hormone receptor alpha (thra) (Aquarana catesbeiana (American bullfrog)).